Reading from the N-terminus, the 232-residue chain is Enterobactin synthase component D (232 aa).

Mg(2+) contacts are provided by aspartate 106, glutamate 108, and glutamate 150.

This sequence belongs to the P-Pant transferase superfamily. EntD family. As to quaternary structure, entB, EntD, EntE, and EntF form a multienzyme complex called enterobactin synthase. The cofactor is Mg(2+).

The protein localises to the membrane. The enzyme catalyses apo-[aryl-carrier protein] + CoA = holo-[aryl-carrier protein] + adenosine 3',5'-bisphosphate + H(+). It carries out the reaction apo-[peptidyl-carrier protein] + CoA = holo-[peptidyl-carrier protein] + adenosine 3',5'-bisphosphate + H(+). The protein operates within siderophore biosynthesis; enterobactin biosynthesis. Involved in the biosynthesis of the siderophore enterobactin (enterochelin), which is a macrocyclic trimeric lactone of N-(2,3-dihydroxybenzoyl)-serine. The serine trilactone serves as a scaffolding for the three catechol functionalities that provide hexadentate coordination for the tightly ligated iron(2+) atoms. Plays an essential role in the assembly of the enterobactin by catalyzing the transfer of the 4'-phosphopantetheine (Ppant) moiety from coenzyme A to the apo-domains of both EntB (ArCP domain) and EntF (PCP domain) to yield their holo-forms which make them competent for the activation of 2,3-dihydroxybenzoate (DHB) and L-serine, respectively. This chain is Enterobactin synthase component D, found in Salmonella austin.